The following is a 554-amino-acid chain: Oxygen-dependent choline dehydrogenase (554 aa).

Residue 4–33 (DYIIIGAGSAGNVLATRLTEDPNTTVLLLE) participates in FAD binding. The active-site Proton acceptor is the histidine 473.

This sequence belongs to the GMC oxidoreductase family. FAD is required as a cofactor.

It catalyses the reaction choline + A = betaine aldehyde + AH2. The catalysed reaction is betaine aldehyde + NAD(+) + H2O = glycine betaine + NADH + 2 H(+). It participates in amine and polyamine biosynthesis; betaine biosynthesis via choline pathway; betaine aldehyde from choline (cytochrome c reductase route): step 1/1. Functionally, involved in the biosynthesis of the osmoprotectant glycine betaine. Catalyzes the oxidation of choline to betaine aldehyde and betaine aldehyde to glycine betaine at the same rate. This is Oxygen-dependent choline dehydrogenase from Klebsiella pneumoniae (strain 342).